A 427-amino-acid polypeptide reads, in one-letter code: Glutamate-1-semialdehyde 2,1-aminomutase (427 aa).

Lysine 264 carries the N6-(pyridoxal phosphate)lysine modification.

Belongs to the class-III pyridoxal-phosphate-dependent aminotransferase family. HemL subfamily. Homodimer. Requires pyridoxal 5'-phosphate as cofactor.

It is found in the cytoplasm. It catalyses the reaction (S)-4-amino-5-oxopentanoate = 5-aminolevulinate. The protein operates within porphyrin-containing compound metabolism; protoporphyrin-IX biosynthesis; 5-aminolevulinate from L-glutamyl-tRNA(Glu): step 2/2. In Campylobacter concisus (strain 13826), this protein is Glutamate-1-semialdehyde 2,1-aminomutase.